The sequence spans 452 residues: UDP-N-acetylmuramoylalanine--D-glutamate ligase (452 aa).

Residue 115 to 121 (GTNGKTT) participates in ATP binding.

It belongs to the MurCDEF family.

The protein resides in the cytoplasm. The enzyme catalyses UDP-N-acetyl-alpha-D-muramoyl-L-alanine + D-glutamate + ATP = UDP-N-acetyl-alpha-D-muramoyl-L-alanyl-D-glutamate + ADP + phosphate + H(+). It participates in cell wall biogenesis; peptidoglycan biosynthesis. Cell wall formation. Catalyzes the addition of glutamate to the nucleotide precursor UDP-N-acetylmuramoyl-L-alanine (UMA). The chain is UDP-N-acetylmuramoylalanine--D-glutamate ligase from Citrifermentans bemidjiense (strain ATCC BAA-1014 / DSM 16622 / JCM 12645 / Bem) (Geobacter bemidjiensis).